A 122-amino-acid polypeptide reads, in one-letter code: Large ribosomal subunit protein uL18 (122 aa).

This sequence belongs to the universal ribosomal protein uL18 family. Part of the 50S ribosomal subunit; part of the 5S rRNA/L5/L18/L25 subcomplex. Contacts the 5S and 23S rRNAs.

In terms of biological role, this is one of the proteins that bind and probably mediate the attachment of the 5S RNA into the large ribosomal subunit, where it forms part of the central protuberance. The polypeptide is Large ribosomal subunit protein uL18 (Hydrogenobaculum sp. (strain Y04AAS1)).